Consider the following 414-residue polypeptide: Lysocardiolipin acyltransferase 1 (414 aa).

Helical transmembrane passes span 47–67 (FILTLFWGSFFGSIFMLSPFL) and 86–106 (ATWLTLPVALLETMFGVKVII). The HXXXXD motif motif lies at 123–128 (HRTRMD). Lys221 carries the post-translational modification N6-acetyllysine. 2 consecutive transmembrane segments (helical) span residues 340–360 (LRVLVVKLLSILYWTLFSPAM) and 362–382 (LLIYLYSLVKWYFIITIVIFV).

Belongs to the 1-acyl-sn-glycerol-3-phosphate acyltransferase family. In terms of tissue distribution, expressed at higher level in heart, kidney and pancreas than in brain, spleen, liver, lung, small intestine and placenta.

The protein resides in the endoplasmic reticulum membrane. It carries out the reaction a 1-acyl-sn-glycero-3-phosphate + an acyl-CoA = a 1,2-diacyl-sn-glycero-3-phosphate + CoA. The catalysed reaction is a 1-acyl-sn-glycero-3-phospho-(1D-myo-inositol) + an acyl-CoA = a 1,2-diacyl-sn-glycero-3-phospho-(1D-myo-inositol) + CoA. The enzyme catalyses 1-acyl-sn-glycero-3-phospho-(1'-sn-glycerol) + an acyl-CoA = a 1,2-diacyl-sn-glycero-3-phospho-(1'-sn-glycerol) + CoA. It catalyses the reaction 1-hexadecanoyl-sn-glycero-3-phosphate + (9Z)-octadecenoyl-CoA = 1-hexadecanoyl-2-(9Z-octadecenoyl)-sn-glycero-3-phosphate + CoA. It carries out the reaction 1-(9Z-octadecenoyl)-sn-glycero-3-phosphate + (9Z)-octadecenoyl-CoA = 1,2-di-(9Z-octadecenoyl)-sn-glycero-3-phosphate + CoA. The catalysed reaction is 1-(9Z,12Z)-octadecadienoyl-sn-glycero-3-phosphate + (9Z)-octadecenoyl-CoA = 1-(9Z,12Z)-octadecadienoyl-2-(9Z)-octadecenoyl-sn-glycero-3-phosphate + CoA. The enzyme catalyses 1-(9Z,12Z,15Z)-octadecatrienoyl-sn-glycero-3-phosphate + (9Z)-octadecenoyl-CoA = 1-(9Z,12Z,15Z)-octadecatrienoyl-2-(9Z)-octadecenoyl-sn-glycero-3-phosphate + CoA. It catalyses the reaction 1-(9Z-octadecenoyl)-sn-glycero-3-phosphate + hexadecanoyl-CoA = 1-(9Z)-octadecenoyl-2-hexadecanoyl-sn-glycero-3-phosphate + CoA. It carries out the reaction 1-(9Z-octadecenoyl)-sn-glycero-3-phosphate + octadecanoyl-CoA = 1-(9Z-octadecenoyl)-2-octadecanoyl-sn-glycero-3-phosphate + CoA. The catalysed reaction is 1-acyl-sn-glycero-3-phospho-(1'-sn-glycerol) + (9Z)-octadecenoyl-CoA = 1-acyl-2-(9Z-octadecenoyl)-sn-glycero-3-phospho-(1'-sn-glycerol) + CoA. The enzyme catalyses a 1-acyl-sn-glycero-3-phospho-(1D-myo-inositol) + (9Z)-octadecenoyl-CoA = a 1-acyl-2-(9Z-octadecenoyl)-sn-glycero-3-phospho-(1D-myo-inositol) + CoA. It catalyses the reaction 1-hexadecanoyl-sn-glycero-3-phospho-(1D-myo-inositol) + hexadecanoyl-CoA = 1,2-dihexadecanoyl-sn-glycero-3-phospho-(1D-myo-inositol) + CoA. It carries out the reaction 1-hexadecanoyl-sn-glycero-3-phospho-(1D-myo-inositol) + octadecanoyl-CoA = 1-hexadecanoyl-2-octadecanoyl-sn-glycero-3-phospho-(1D-myo-inositol) + CoA. The catalysed reaction is 1-hexadecanoyl-sn-glycero-3-phospho-(1D-myo-inositol) + (9Z)-octadecenoyl-CoA = 1-hexadecanoyl-2-(9Z-octadecenoyl)-sn-glycero-3-phospho-(1D-myo-inositol) + CoA. The enzyme catalyses 1-hexadecanoyl-sn-glycero-3-phospho-(1D-myo-inositol) + (9Z,12Z)-octadecadienoyl-CoA = 1-hexadecanoyl-2-(9Z,12Z-octadecadienoyl)-sn-glycero-3-phospho-(1D-myo-inositol) + CoA. It catalyses the reaction 1-hexadecanoyl-sn-glycero-3-phospho-(1D-myo-inositol) + (5Z,8Z,11Z,14Z)-eicosatetraenoyl-CoA = 1-hexadecanoyl-2-(5Z,8Z,11Z,14Z-eicosatetraenoyl)-sn-glycero-3-phospho-D-myo-inositol + CoA. It carries out the reaction 1-hexadecanoyl-sn-glycero-3-phospho-(1'-sn-glycerol) + hexadecanoyl-CoA = 1,2-dihexadecanoyl-sn-glycero-3-phospho-(1'-sn-glycerol) + CoA. The catalysed reaction is 1-hexadecanoyl-sn-glycero-3-phospho-(1'-sn-glycerol) + octadecanoyl-CoA = 1-hexadecanoyl-2-octadecanoyl-sn-glycero-3-phospho-(1'-sn-glycerol) + CoA. The enzyme catalyses 1-hexadecanoyl-sn-glycero-3-phospho-(1'-sn-glycerol) + (9Z)-octadecenoyl-CoA = 1-hexadecanoyl-2-(9Z-octadecenoyl)-sn-glycero-3-phospho-(1'-sn-glycerol) + CoA. It catalyses the reaction 1-hexadecanoyl-sn-glycero-3-phospho-(1'-sn-glycerol) + (9Z,12Z)-octadecadienoyl-CoA = 1-hexadecanoyl-2-(9Z,12Z-octadecadienoyl)-sn-glycero-3-phospho-(1'-sn-glycerol) + CoA. It carries out the reaction 1-tetradecanoyl-sn-glycero-3-phospho-(1'-sn-glycerol) + (9Z)-octadecenoyl-CoA = 1-tetradecanoyl-2-(9Z-octadecenoyl)-sn-glycero-3-phospho-(1'-sn-glycerol) + CoA. The catalysed reaction is 1-octadecanoyl-sn-glycero-3-phospho-(1'-sn-glycerol) + (9Z)-octadecenoyl-CoA = 1-octadecanoyl-2-(9Z-octadecenoyl)-sn-glycero-3-phospho-(1'-sn-glycerol) + CoA. The enzyme catalyses 1-(9Z-octadecenoyl)-sn-glycero-3-phospho-(1'-sn-glycerol) + (9Z)-octadecenoyl-CoA = 1,2-di-(9Z-octadecenoyl)-sn-glycero-3-phospho-(1'-sn-glycerol) + CoA. It catalyses the reaction 1-hexadecanoyl-sn-glycero-3-phospho-(1D-myo-inositol) + dodecanoyl-CoA = 1-hexadecanoyl-2-dodecanoyl-sn-glycero-3-phospho-(1D-myo-inositol) + CoA. It carries out the reaction 1',3'-bis-[1-acyl-sn-glycero-3-phospho]-glycerol + (9Z)-octadecenoyl-CoA = 1'-[1-acyl-2-(9Z)-octadecenoyl-sn-glycero-3-phospho],3'-[1-acyl,2-hydroxy-sn-glycero-3-phospho]-glycerol + CoA. The catalysed reaction is 1'-[1,2-diacyl-sn-glycero-3-phospho],3'-[1-acyl-sn-glycero-3-phospho]-glycerol + (9Z)-octadecenoyl-CoA = 1'-[1,2-diacyl-sn-glycero-3-phospho],3'-[1-acyl,2-(9Z)-octadecenoyl-sn-glycero-3-phospho]-glycerol + CoA. The enzyme catalyses 1'-[1,2-diacyl-sn-glycero-3-phospho],3'-[1-acyl-sn-glycero-3-phospho]-glycerol + (9Z,12Z)-octadecadienoyl-CoA = 1'-[1,2-diacyl-sn-glycero-3-phospho],3'-[1-acyl,2-(9Z,12Z)-octadecadienoyl-sn-glycero-3-phospho]-glycerol + CoA. It catalyses the reaction 1'-[1,2-diacyl-sn-glycero-3-phospho],3'-[1-acyl-sn-glycero-3-phospho]-glycerol + dodecanoyl-CoA = 1'-[1,2-diacyl-sn-glycero-3-phospho],3'-[1-acyl,2-dodecanoyl-sn-glycero-3-phospho]-glycerol + CoA. It carries out the reaction 1',3'-bis-[1-acyl-sn-glycero-3-phospho]-glycerol + dodecanoyl-CoA = 1'-[1-acyl-2-dodecanoyl-sn-glycero-3-phospho],3'-[1-acyl,2-hydroxy-sn-glycero-3-phospho]-glycerol + CoA. The catalysed reaction is a 1-acyl-sn-glycero-3-phosphate + (9Z)-octadecenoyl-CoA = a 1-acyl-2-(9Z-octadecenoyl)-sn-glycero-3-phosphate + CoA. The enzyme catalyses 1',3'-bis-[1-acyl-sn-glycero-3-phospho]-glycerol + (9Z,12Z)-octadecadienoyl-CoA = 1'-[1-acyl-2-(9Z,12Z)-octadecadienoyl-sn-glycero-3-phospho],3'-[1-acyl,2-hydroxy-sn-glycero-3-phospho]-glycerol + CoA. It catalyses the reaction 1',3'-bis-[1-acyl-sn-glycero-3-phospho]-glycerol + hexadecanoyl-CoA = 1'-[1-acyl-2-hexadecanoyl-sn-glycero-3-phospho],3'-[1-acyl,2-hydroxy-sn-glycero-3-phospho]-glycerol + CoA. It carries out the reaction 1',3'-bis-[1-acyl-sn-glycero-3-phospho]-glycerol + octadecanoyl-CoA = 1'-[1-acyl-2-octadecanoyl-sn-glycero-3-phospho],3'-[1-acyl,2-hydroxy-sn-glycero-3-phospho]-glycerol + CoA. The catalysed reaction is 1'-[1,2-diacyl-sn-glycero-3-phospho],3'-[1-acyl-sn-glycero-3-phospho]-glycerol + octanoyl-CoA = 1'-[1,2-diacyl-sn-glycero-3-phospho],3'-[1-acyl,2-octanoyl-sn-glycero-3-phospho]-glycerol + CoA. The enzyme catalyses 1',3'-bis-[1-acyl-sn-glycero-3-phospho]-glycerol + octanoyl-CoA = 1'-[1-acyl-2-octanoyl-sn-glycero-3-phospho],3'-[1-acyl,2-hydroxy-sn-glycero-3-phospho]-glycerol + CoA. It catalyses the reaction 1'-[1,2-diacyl-sn-glycero-3-phospho],3'-[1-acyl-sn-glycero-3-phospho]-glycerol + hexadecanoyl-CoA = 1'-[1,2-diacyl-sn-glycero-3-phospho],3'-[1-acyl,2-hexadecanoyl-sn-glycero-3-phospho]-glycerol + CoA. It carries out the reaction 1'-[1,2-diacyl-sn-glycero-3-phospho],3'-[1-acyl-sn-glycero-3-phospho]-glycerol + (5Z,8Z,11Z,14Z)-eicosatetraenoyl-CoA = 1'-[1,2-diacyl-sn-glycero-3-phospho],3'-[1-acyl,2-(5Z,8Z,11Z,14Z)-eicosatetraenoyl-sn-glycero-3-phospho]-glycerol + CoA. The catalysed reaction is 1',3'-bis-[1-acyl-sn-glycero-3-phospho]-glycerol + (5Z,8Z,11Z,14Z)-eicosatetraenoyl-CoA = 1'-[1-acyl-2-(5Z,8Z,11Z,14Z)-eicosatetraenoyl-sn-glycero-3-phospho],3'-[1-acyl,2-hydroxy-sn-glycero-3-phospho]-glycerol + CoA. The enzyme catalyses a 1-acyl-sn-glycero-3-phospho-(1D-myo-inositol) + octadecanoyl-CoA = a 1-acyl-2-octadecanoyl-sn-glycero-3-phospho-(1D-myo-inositol) + CoA. It catalyses the reaction a 2-acyl-sn-glycero-3-phospho-D-myo-inositol + octadecanoyl-CoA = 1-octadecanoyl-2-acyl-sn-glycero-3-phospho-1D-myo-inositol + CoA. Its pathway is phospholipid metabolism; CDP-diacylglycerol biosynthesis; CDP-diacylglycerol from sn-glycerol 3-phosphate: step 2/3. Exhibits acyl-CoA:lysocardiolipin acyltransferase (ALCAT) activity; catalyzes the reacylation of lyso-cardiolipin to cardiolipin (CL), a key step in CL remodeling. Recognizes both monolysocardiolipin and dilysocardiolipin as substrates with a preference for linoleoyl-CoA and oleoyl-CoA as acyl donors. Also exhibits 1-acyl-sn-glycerol-3-phosphate acyltransferase activity (AGPAT) activity; converts 1-acyl-sn-glycerol-3- phosphate (lysophosphatidic acid or LPA) into 1,2-diacyl-sn-glycerol-3- phosphate (phosphatidic acid or PA) by incorporating an acyl moiety at the sn-2 position of the glycerol backbone. Possesses both lysophosphatidylinositol acyltransferase (LPIAT) and lysophosphatidylglycerol acyltransferase (LPGAT) activities. Required for establishment of the hematopoietic and endothelial lineages. This Homo sapiens (Human) protein is Lysocardiolipin acyltransferase 1 (LCLAT1).